Reading from the N-terminus, the 208-residue chain is N-(5'-phosphoribosyl)anthranilate isomerase (208 aa).

It belongs to the TrpF family.

The catalysed reaction is N-(5-phospho-beta-D-ribosyl)anthranilate = 1-(2-carboxyphenylamino)-1-deoxy-D-ribulose 5-phosphate. Its pathway is amino-acid biosynthesis; L-tryptophan biosynthesis; L-tryptophan from chorismate: step 3/5. In Neisseria meningitidis serogroup B (strain ATCC BAA-335 / MC58), this protein is N-(5'-phosphoribosyl)anthranilate isomerase.